The following is a 223-amino-acid chain: Deoxyribose-phosphate aldolase (223 aa).

D89 (proton donor/acceptor) is an active-site residue. K152 functions as the Schiff-base intermediate with acetaldehyde in the catalytic mechanism. K181 acts as the Proton donor/acceptor in catalysis.

The protein belongs to the DeoC/FbaB aldolase family. DeoC type 1 subfamily.

It is found in the cytoplasm. The enzyme catalyses 2-deoxy-D-ribose 5-phosphate = D-glyceraldehyde 3-phosphate + acetaldehyde. Its pathway is carbohydrate degradation; 2-deoxy-D-ribose 1-phosphate degradation; D-glyceraldehyde 3-phosphate and acetaldehyde from 2-deoxy-alpha-D-ribose 1-phosphate: step 2/2. In terms of biological role, catalyzes a reversible aldol reaction between acetaldehyde and D-glyceraldehyde 3-phosphate to generate 2-deoxy-D-ribose 5-phosphate. This is Deoxyribose-phosphate aldolase from Listeria monocytogenes serotype 4b (strain F2365).